The primary structure comprises 552 residues: Putative transport protein YPTS_4123 (552 aa).

A run of 6 helical transmembrane segments spans residues 1–21 (MSAI…GLWI), 26–46 (IYGV…VGHF), 65–85 (FGLI…FFSS), 96–116 (FAIL…KLFA), 119–139 (LPII…LGAA), and 158–178 (MGYA…MWLI). RCK C-terminal domains lie at 192 to 276 (AFDS…VVGE) and 279 to 361 (DVTL…IVGN). The next 6 membrane-spanning stretches (helical) occupy residues 371–391 (MLPV…PLFV), 393–413 (GFPA…ALIL), 439–459 (IVLF…NTLV), 464–484 (LAWI…VGIL), 493–513 (YLTL…LAFA), and 530–550 (VYPL…VLFW).

It belongs to the AAE transporter (TC 2.A.81) family. YidE subfamily.

The protein localises to the cell membrane. This is Putative transport protein YPTS_4123 from Yersinia pseudotuberculosis serotype IB (strain PB1/+).